Consider the following 144-residue polypeptide: Large ribosomal subunit protein uL15 (144 aa).

Residues 1–56 (MELNNLKPAAGAKHAKRRVGRGIGSGLGKTAGRGHKGQKSRSGGFHKVGFEGGQMP) form a disordered region. Over residues 21–31 (RGIGSGLGKTA) the composition is skewed to gly residues.

It belongs to the universal ribosomal protein uL15 family. Part of the 50S ribosomal subunit.

Its function is as follows. Binds to the 23S rRNA. The polypeptide is Large ribosomal subunit protein uL15 (Burkholderia cenocepacia (strain HI2424)).